A 1346-amino-acid polypeptide reads, in one-letter code: Zinc finger protein 541 (1346 aa).

Disordered stretches follow at residues 1-34 (MDQYSLGDEGALPSEMHLPSFSESQGLNCSDTLN) and 113-136 (EADEGGRATSGSARKGKRQHSSPQ). Positions 21-32 (FSESQGLNCSDT) are enriched in polar residues. 3 consecutive C2H2-type zinc fingers follow at residues 140–162 (LDCSLCGKVFSSASSLSKHYLTH), 168–190 (HVCKICSKAFKRQDHLTGHMLTH), and 196–220 (FVCIEQGCSKSYCDYRSLRRHYEVH). Disordered regions lie at residues 235 to 271 (ACGDSPHAHESAGQPPPSSLRSLVPPEARSPGSLLPH), 283 to 328 (VHQK…AAPA), 437 to 472 (SAVPSREGSESGPGPSSGSPSEESPPGPGGGLEDAL), and 578 to 744 (SQLP…GGYR). Composition is skewed to low complexity over residues 294–323 (PAGASDSEGRNTACPCPASSGSSSCTPAGP) and 440–458 (PSREGSESGPGPSSGSPSE). A compositionally biased stretch (polar residues) spans 671–685 (PDISSLAKQLRSSKG). The C2H2-type 4 zinc finger occupies 838 to 860 (FVCKNCSQMFYTEKGLSSHMCFH). Residues 931–971 (AMGQEKDGEERDSKESSQQRKRKKRPPPSTAGEPGPAGCHQ) form a disordered region. The segment covering 934–948 (QEKDGEERDSKESSQ) has biased composition (basic and acidic residues). Residues 1053 to 1145 (PHINIGSRFQ…VALETLLLRG (93 aa)) form the ELM2 domain. An SANT domain is found at 1160–1211 (TGSDVWTPIEKRLFKKAFYAHKKDFYLIHKMIQTKTVAQCVEYYYIWKKMIK). Positions 1224–1281 (VKREPEEVERTEEKVPCSPRERPSHHPTPKLKTKSYRRESILSSSPNAGSKRTPELLG) are disordered. The segment covering 1234–1247 (TEEKVPCSPRERPS) has biased composition (basic and acidic residues). Residues 1248-1258 (HHPTPKLKTKS) show a composition bias toward basic residues. Polar residues predominate over residues 1264-1273 (ILSSSPNAGS). The segment at 1289–1311 (FPCRECERVFDKIKSRNAHMKRH) adopts a C2H2-type 5 zinc-finger fold.

In terms of assembly, interacts with DNTTIP1. Identified in a complex with KCDT19, HDAC1 and HSPA2. Component of a histone deacetylase complex containing DNTTIP1, ZNF541, HDAC1 and HDAC2. Identified in a complex with HDAC1, HDAC2, DNTTIP1 and KCTD19.

The protein localises to the nucleus. In terms of biological role, transcription regulator which is essential for male fertility and for the completion of meiotic prophase in spermatocytes. Regulates progression of the pachytene stage of meiotic prophase by activating the expression of genes involved in meiosis during spermatogenesis. Maintains the repression of pre-pachytene transcriptional programs, including meiotic double-strand breaks (DSB) formation genes in pachytene spermatocytes and suppresses aberrant DSB formation after mid-pachytene, thus ensuring meiosis progression. The polypeptide is Zinc finger protein 541 (ZNF541) (Homo sapiens (Human)).